The sequence spans 98 residues: Integration host factor subunit alpha (98 aa).

The segment at 50–71 is disordered; the sequence is GNFDLRDKNQRPGRNPKTGEDI.

This sequence belongs to the bacterial histone-like protein family. In terms of assembly, heterodimer of an alpha and a beta chain.

Functionally, this protein is one of the two subunits of integration host factor, a specific DNA-binding protein that functions in genetic recombination as well as in transcriptional and translational control. This is Integration host factor subunit alpha from Proteus mirabilis (strain HI4320).